A 230-amino-acid chain; its full sequence is 3,4-dihydroxy-2-butanone 4-phosphate synthase (230 aa).

Residues 42 to 43 (RE), aspartate 47, 155 to 159 (RRGHT), and glutamate 179 contribute to the D-ribulose 5-phosphate site. Glutamate 43 is a binding site for Mg(2+). Position 158 (histidine 158) interacts with Mg(2+).

Belongs to the DHBP synthase family. Homodimer. The cofactor is Mg(2+). Mn(2+) serves as cofactor.

The enzyme catalyses D-ribulose 5-phosphate = (2S)-2-hydroxy-3-oxobutyl phosphate + formate + H(+). The protein operates within cofactor biosynthesis; riboflavin biosynthesis; 2-hydroxy-3-oxobutyl phosphate from D-ribulose 5-phosphate: step 1/1. Its function is as follows. Catalyzes the conversion of D-ribulose 5-phosphate to formate and 3,4-dihydroxy-2-butanone 4-phosphate. This is 3,4-dihydroxy-2-butanone 4-phosphate synthase from Bordetella pertussis (strain Tohama I / ATCC BAA-589 / NCTC 13251).